The chain runs to 302 residues: Large ribosomal subunit protein uL29m (302 aa).

Belongs to the universal ribosomal protein uL29 family. In terms of assembly, component of the mitochondrial large ribosomal subunit. Mature mitochondrial ribosomes consist of a small (37S) and a large (54S) subunit. The 37S subunit contains at least 33 different proteins and 1 molecule of RNA (15S). The 54S subunit contains at least 45 different proteins and 1 molecule of RNA (21S).

It localises to the mitochondrion. The polypeptide is Large ribosomal subunit protein uL29m (MRPL4) (Debaryomyces hansenii (strain ATCC 36239 / CBS 767 / BCRC 21394 / JCM 1990 / NBRC 0083 / IGC 2968) (Yeast)).